The primary structure comprises 398 residues: Nonsense-mediated decay protein 4 (398 aa).

The segment at 327–355 (PVTSNYRGKNNRGRNNRGRRGNKRRERER) is disordered. A compositionally biased stretch (basic residues) spans 335–350 (KNNRGRNNRGRRGNKR).

Its subcellular location is the cytoplasm. In terms of biological role, involved in nonsense-mediated decay of mRNAs containing premature stop codons. The protein is Nonsense-mediated decay protein 4 (NMD4) of Candida albicans (strain SC5314 / ATCC MYA-2876) (Yeast).